The chain runs to 544 residues: Peptide chain release factor 3 (544 aa).

The 270-residue stretch at 17-286 (EKRRNFAIIS…SFLDYGLAPR (270 aa)) folds into the tr-type G domain. GTP contacts are provided by residues 26-33 (SHPDAGKT), 94-98 (DTPGH), and 148-151 (NKMD).

The protein belongs to the TRAFAC class translation factor GTPase superfamily. Classic translation factor GTPase family. PrfC subfamily.

The protein resides in the cytoplasm. In terms of biological role, increases the formation of ribosomal termination complexes and stimulates activities of RF-1 and RF-2. It binds guanine nucleotides and has strong preference for UGA stop codons. It may interact directly with the ribosome. The stimulation of RF-1 and RF-2 is significantly reduced by GTP and GDP, but not by GMP. The protein is Peptide chain release factor 3 of Microcystis aeruginosa (strain NIES-843 / IAM M-2473).